The following is a 101-amino-acid chain: Cilia- and flagella-associated protein 141 (101 aa).

Microtubule inner protein component of sperm flagellar doublet microtubules. As to expression, expressed in airway epithelial cells.

It is found in the cytoplasm. The protein localises to the cytoskeleton. The protein resides in the cilium axoneme. Its subcellular location is the flagellum axoneme. Its function is as follows. Microtubule inner protein (MIP) part of the dynein-decorated doublet microtubules (DMTs) in cilia axoneme, which is required for motile cilia beating. The polypeptide is Cilia- and flagella-associated protein 141 (Homo sapiens (Human)).